An 876-amino-acid chain; its full sequence is SED5-binding protein 2 (876 aa).

The residue at position 51 (Ser51) is a Phosphoserine. The zinc finger-like stretch occupies residues 164–189 (CRRCRSYMNPFVVFINQGRKWQCNIC). The span at 300–324 (VSDEDDEESDGEEEDEDEEEEDVDN) shows a compositional bias: acidic residues. Positions 300 to 326 (VSDEDDEESDGEEEDEDEEEEDVDNSE) are disordered.

This sequence belongs to the SEC23/SEC24 family. SEC24 subfamily. As to quaternary structure, COPII is composed of at least five proteins: the SEC23/24 complex, the SEC13/31 complex and SAR1. Interacts with GRH1.

It localises to the cytoplasm. The protein resides in the golgi apparatus membrane. Its subcellular location is the endoplasmic reticulum membrane. Functionally, component of the COPII coat, that covers ER-derived vesicles involved in transport from the endoplasmic reticulum to the Golgi apparatus. COPII acts in the cytoplasm to promote the transport of secretory, plasma membrane, and vacuolar proteins from the endoplasmic reticulum to the Golgi complex. The sequence is that of SED5-binding protein 2 (SFB2) from Saccharomyces cerevisiae (strain ATCC 204508 / S288c) (Baker's yeast).